Reading from the N-terminus, the 426-residue chain is MKQLRLEPVVQVRGEINIPGSKSISNRALLLATLAQGTTTLTNLLDSDDIRHMLASLKQLGVNYRLSQNNTVCELDGLGGVISSASAQELFLGNAGTAMRPLCAALTLGQGEFTLTGEPRMEERPIGDLVDALRKLGANVVYLKNDGFPPLTINATGLNGGDVEIAGDLSSQFLTALLMVAPLAKGSVNIHVKGELVSKPYIDITIALMAQFGVNVINHDYARFEIVAGQRYISPCKVLVEGDASSASYFLAAGAIKGGEVKVTGVGRLSIQGDVKFADVLEKMGADIEWGDDYIIARGSPLTAVDLDMNHIPDAAMTIATAALFAKGTTVIRNIYNWRIKETDRLAAMATELRKVGAEVEEGNDYIKITPPAVINTAEIDTYNDHRMAMCFSMLAFADCGITINDPDCTSKTFPDYFKQFASLQG.

Positions 22, 23, and 27 each coordinate 3-phosphoshikimate. Lys-22 is a binding site for phosphoenolpyruvate. Phosphoenolpyruvate contacts are provided by Gly-96 and Arg-124. 3-phosphoshikimate-binding residues include Ser-170, Ser-171, Gln-172, Ser-198, Asp-314, Asn-337, and Lys-341. Residue Gln-172 coordinates phosphoenolpyruvate. Asp-314 acts as the Proton acceptor in catalysis. 3 residues coordinate phosphoenolpyruvate: Arg-345, Arg-387, and Lys-412.

The protein belongs to the EPSP synthase family. In terms of assembly, monomer.

The protein resides in the cytoplasm. The catalysed reaction is 3-phosphoshikimate + phosphoenolpyruvate = 5-O-(1-carboxyvinyl)-3-phosphoshikimate + phosphate. It functions in the pathway metabolic intermediate biosynthesis; chorismate biosynthesis; chorismate from D-erythrose 4-phosphate and phosphoenolpyruvate: step 6/7. Functionally, catalyzes the transfer of the enolpyruvyl moiety of phosphoenolpyruvate (PEP) to the 5-hydroxyl of shikimate-3-phosphate (S3P) to produce enolpyruvyl shikimate-3-phosphate and inorganic phosphate. This chain is 3-phosphoshikimate 1-carboxyvinyltransferase, found in Shewanella sp. (strain W3-18-1).